The primary structure comprises 183 residues: U3 small nucleolar ribonucleoprotein protein imp3 (183 aa).

The S4 RNA-binding domain occupies 108-174 (RRLPVVMRNI…IKKHVMDYNN (67 aa)).

The protein belongs to the universal ribosomal protein uS4 family. As to quaternary structure, component of a heterotrimeric complex containing imp3, imp4 and mpp10.

It is found in the nucleus. The protein resides in the nucleolus. In terms of biological role, component of the U3 small nucleolar ribonucleoprotein. Required for the early cleavages at sites A0, A1 and A2 during 18S ribosomal pre-RNA processing. This chain is U3 small nucleolar ribonucleoprotein protein imp3, found in Caenorhabditis elegans.